The primary structure comprises 372 residues: Probable O-methyltransferase 2 (372 aa).

Residues Gly-216, Asp-259, and Lys-273 each contribute to the S-adenosyl-L-methionine site. Catalysis depends on His-277, which acts as the Proton acceptor.

The protein belongs to the class I-like SAM-binding methyltransferase superfamily. Cation-independent O-methyltransferase family. COMT subfamily. Homodimer. As to expression, expressed predominantly in root hairs.

Functionally, O-methyltransferase of unknown substrate specificity. Not active on resorcinol, orcinol, guaiacol, eugenol, ferulic acid, p-coumaric acid, catechol, caffeic acid or monomethyl ethers of resorcinol or orcinol. The polypeptide is Probable O-methyltransferase 2 (OMT2) (Sorghum bicolor (Sorghum)).